The sequence spans 498 residues: Ammonium transporter 3 member 1 (498 aa).

11 consecutive transmembrane segments (helical) span residues 33 to 53, 58 to 78, 143 to 163, 171 to 191, 206 to 226, 241 to 261, 276 to 296, 301 to 321, 325 to 345, 369 to 389, and 412 to 432; these read ISAT…YGSI, WAVN…LCWV, MVYF…GSLL, WMLF…FSLW, GGYV…YWVG, VLLM…FNGG, NTNI…VIFF, VIGA…GAGL, WAAI…MMVV, GFLG…SLFL, and VAGA…VCLA. The segment at 478 to 498 is disordered; it reads DNNDTHHNNNKAAPSGVTQNV. A compositionally biased stretch (polar residues) spans 487-498; it reads NKAAPSGVTQNV.

Belongs to the ammonia transporter channel (TC 1.A.11.2) family. Expressed in root.

The protein resides in the membrane. Involved in ammonium transport. The chain is Ammonium transporter 3 member 1 (AMT3-1) from Oryza sativa subsp. japonica (Rice).